A 255-amino-acid polypeptide reads, in one-letter code: Small ribosomal subunit protein eS1 (255 aa).

The residue at position 2 (alanine 2) is an N-acetylalanine; partial.

This sequence belongs to the eukaryotic ribosomal protein eS1 family. Component of the small ribosomal subunit. Mature ribosomes consist of a small (40S) and a large (60S) subunit. The 40S subunit contains about 33 different proteins and 1 molecule of RNA (18S). The 60S subunit contains about 49 different proteins and 3 molecules of RNA (25S, 5.8S and 5S).

It is found in the cytoplasm. In Pyrenophora tritici-repentis (strain Pt-1C-BFP) (Wheat tan spot fungus), this protein is Small ribosomal subunit protein eS1 (rps1).